Here is a 282-residue protein sequence, read N- to C-terminus: uncharacterized protein (282 aa).

In terms of domain architecture, N-acetyltransferase spans 5–140; sequence DELIKLHEEH…SFQPYTKKLD (136 aa).

This sequence belongs to the acetyltransferase family.

This is an uncharacterized protein from Bacillus subtilis (strain 168).